The sequence spans 2110 residues: MGAVTWLLPGIFLALFALTPEGGVLKKIIRHKRESGLNMTLPEENQPVVFNHIYNIKLPMGSQCSVDLESASGEKDLTPTPESSGSFQEHTVDGENQIVFTHRINIPRRACGCAAAPDVKELLSRLEELELLVSSLREQCTMGTGCCLQPAEGRLDTRPFCSGRGNFSAEGCGCVCEPGWKGPNCSEPDCPGNCNLRGQCLDGQCICDEGFTGEDCSQLACPNDCNDQGRCVNGVCVCFEGYAGPDCGLEVCPVPCSEEHGMCVDGRCVCKDGFAGEDCNEPLCLNNCYNRGRCVENECVCDEGFTGEDCSELICPNDCFDRGRCINGTCYCEEGFTGEDCGELTCPNDCQGRGQCEEGQCVCNEGFAGADCSEKRCPADCHHRGRCLNGQCECDDGFTGADCGDLQCPNGCSGHGRCVNGQCVCDEGYTGEDCSQRRCPNDCHNRGLCVQGKCICEQGFKGFDCSEMSCPNDCHQHGRCVNGMCICDDDYTGEDCRDRRCPRDCSQRGRCVDGQCICEDGFTGPDCAELSCPSDCHGHGRCVNGQCICHEGFTGKDCKEQRCPSDCHGQGRCEDGQCICHEGFTGLDCGQRSCPNDCSNQGQCVSGRCICNEGYTGIDCSEVSPPKDLIVTEVTEETVNLAWDNEMRVTEYLIMYTPTHADGLEMQFRVPGDQTSTTIRELEPGVEYFIRVFAILENKRSIPVSARVATYLPAPEGLKFKSIKETSVEVEWDPLDIAFETWEIIFRNMNKEDEGEITKSLRRPETSYRQTGLAPGQEYEISLHIVKNNTRGPGLKKVTTTRLDAPSHIEVKDVTDTTALITWFKPLAEIDSIELSYGIKDVPGDRTTIDLTHEDNQYSIGNLRPDTEYEVSLISRRVDMASNPAKETFITGLDAPRNLRRVSQTDNSITLEWRNVKADIDSYRIKYAPISGGDHAEIDVPKSQQATTKTTLTGLRPGTEYGIGVSAVKGDKESDPATINAATEIDAPKDLRVSETTQDSLTFFWTTPLAKFDRYRLNYSLPTGQSMEVQLPKDATSHVLTDLEPGQEYTVLLIAEKGRHKSKPARVKASTEEVPSLENLTVTEAGWDGLRLNWTADDLAYEYFVIQVQEANNVETAHNFTVPGNLRAADIPGLKVATSYRVSIYGVARGYRTPVLSAETSTGTTPNLGEVTVAEVGWDALTLNWTAPEGAYKNFFIQVLEADTTQTVQNLTVPGGLRSVDLPGLKAATRYYITLRGVTQDFGTAPLSVEVLTEDLPQLGGLSVTEVSWDGLTLNWTTDDLAYKHFVVQVQEANNVEAAQNLTVPGSLRAVDIPGLKADTPYRVSIYGVIQGYRTPMLSTDVSTAREPEIGNLNVSDVTPKSFNLSWTATDGIFDMFTIEIIDSNRLLQTAEHNISGAERTAHISGLPPSTDFIVYLSGIAPSIRTKTISTTATTEALPLLENLTISDTNPYGFTVSWTASENAFDSFLVTVVDSGKLLDPQEFTLSGTQRKLELRGLITGIGYEVLVSGFTQGHQTKPLRAETITEAEPEVDNLLVSDATPDGFRLSWTADEGIFDSFVIRIRDTKKQSEPQEISLPSPERTRDITGLREATEYEIELYGISRGRRSQPVSAIATTAMGSPKEIMFSDITENAATVSWRAPTAQVESFRITYVPMTGGAPSMVTVDGTDTETRLVKLTPGVEYRVSVIAMKGFEESDPVSGTLITALDGPSGLLIANITDSEALAMWQPAIATVDSYVISYTGERVPEVTRTVSGNTVEYELHDLEPATEYILSIFAEKGQQKSSTIATKFTTDLDSPREFTATEVQSETALLTWRPPRASVTGYLLVYESVDGTVKEVIVGPDTTSYSLADLSPSTHYSARIQALSGSLRSKLIQTIFTTIGLLYPFPRDCSQAMLNGDTTSGLYTIYINGDKTQALEVYCDMTSDGGGWIVFLRRKNGREDFYRNWKAYAAGFGDRREEFWLGLDNLSKITAQGQYELRVDLQDHGESAYAVYDRFSVGDAKSRYKLKVEGYSGTAGDSMNYHNGRSFSTYDKDTDSAITNCALSYKGAFWYKNCHRVNLMGRYGDNNHSQGVNWFHWKGHEYSIQFAEMKLRPSNFRNLEGRRKRA.

An N-terminal signal peptide occupies residues 1 to 22; it reads MGAVTWLLPGIFLALFALTPEG. N-linked (GlcNAc...) asparagine glycosylation occurs at Asn-38. A phosphoserine mark is found at Ser-65, Ser-70, and Ser-72. The interval 69–91 is disordered; the sequence is ESASGEKDLTPTPESSGSFQEHT. O-linked (Xyl...) (chondroitin sulfate) serine glycosylation occurs at Ser-72. Residues 80-89 show a composition bias toward polar residues; the sequence is TPESSGSFQE. Residues 118–142 adopt a coiled-coil conformation; sequence DVKELLSRLEELELLVSSLREQCTM. Residues Asn-166 and Asn-184 are each glycosylated (N-linked (GlcNAc...) asparagine). The region spanning 174–185 is the EGF-like 1; incomplete domain; that stretch reads CVCEPGWKGPNC. EGF-like domains follow at residues 186 to 216, 217 to 247, 248 to 279, 280 to 310, 311 to 341, 342 to 372, 373 to 403, 404 to 434, 435 to 465, 466 to 496, 497 to 527, 528 to 558, 559 to 589, and 590 to 621; these read SEPD…GEDC, SQLA…GPDC, GLEV…GEDC, NEPL…GEDC, SELI…GEDC, GELT…GADC, SEKR…GADC, GDLQ…GEDC, SQRR…GFDC, SEMS…GEDC, RDRR…GPDC, AELS…GKDC, KEQR…GLDC, and GQRS…IDCS. Cystine bridges form between Cys-190-Cys-200, Cys-194-Cys-205, Cys-207-Cys-216, Cys-221-Cys-231, Cys-225-Cys-236, Cys-238-Cys-247, Cys-252-Cys-263, Cys-256-Cys-268, Cys-270-Cys-279, Cys-284-Cys-294, Cys-288-Cys-299, Cys-301-Cys-310, Cys-315-Cys-325, Cys-319-Cys-330, Cys-332-Cys-341, Cys-346-Cys-356, Cys-350-Cys-361, Cys-363-Cys-372, Cys-377-Cys-387, Cys-381-Cys-392, Cys-394-Cys-403, Cys-408-Cys-418, Cys-412-Cys-423, Cys-425-Cys-434, Cys-439-Cys-449, Cys-443-Cys-454, Cys-456-Cys-465, Cys-470-Cys-480, Cys-474-Cys-485, Cys-487-Cys-496, Cys-501-Cys-511, Cys-505-Cys-516, Cys-518-Cys-527, Cys-532-Cys-542, Cys-536-Cys-547, Cys-549-Cys-558, Cys-563-Cys-573, Cys-567-Cys-578, Cys-580-Cys-589, Cys-594-Cys-604, Cys-598-Cys-609, and Cys-611-Cys-620. Residue Asn-327 is glycosylated (N-linked (GlcNAc...) asparagine). Fibronectin type-III domains follow at residues 625–715, 716–804, 805–894, 895–988, 989–1077, 1078–1165, 1167–1259, 1260–1348, 1349–1440, 1442–1530, 1531–1620, 1621–1710, 1711–1797, and 1798–1886; these read PPKD…LPAP, EGLK…TRLD, APSH…TGLD, APRN…IDAP, KDLR…VPSL, ENLT…TGTT, NLGE…LPQL, GGLS…AREP, EIGN…ALPL, ENLT…EAEP, EVDN…TAMG, SPKE…ALDG, PSGL…TDLD, and SPRE…IGLL. Asn-788 carries N-linked (GlcNAc...) asparagine glycosylation. A Phosphothreonine modification is found at Thr-905. 12 N-linked (GlcNAc...) asparagine glycosylation sites follow: Asn-1018, Asn-1079, Asn-1093, Asn-1119, Asn-1184, Asn-1210, Asn-1275, Asn-1301, Asn-1354, Asn-1364, Asn-1394, and Asn-1443. Asn-1718 carries an N-linked (GlcNAc...) asparagine glycan. In terms of domain architecture, Fibrinogen C-terminal spans 1884-2099; it reads GLLYPFPRDC…FAEMKLRPSN (216 aa). N-linked (GlcNAc...) asparagine glycosylation is found at Asn-1969 and Asn-2071.

It belongs to the tenascin family. Homohexamer; disulfide-linked. A homotrimer may be formed in the triple coiled-coil region and may be stabilized by disulfide rings at both ends. Two of such half-hexabrachions may be disulfide linked within the central globule. Interacts with CSPG4. Interacts (via the 3rd fibronectin type-III domain) with integrin ITGA9:ITGB1. Post-translationally, N-glycosylated. As to expression, expressed in the corneal limbus, the periosteum and the rib molecular layer of the cerebellum, the matrix of kidney tubules, blood vessels, stomach and intestine (at protein level). Weakly expressed in the brain. In terms of tissue distribution, highly expressed in the thymus and moderately expressed in the brain.

Its subcellular location is the secreted. It localises to the extracellular space. The protein resides in the extracellular matrix. Its function is as follows. Extracellular matrix protein implicated in guidance of migrating neurons as well as axons during development, synaptic plasticity as well as neuronal regeneration. Promotes neurite outgrowth when provided to neurons in culture. May play a role in supporting the growth of epithelial tumors. Ligand for integrins ITGA8:ITGB1, ITGA9:ITGB1, ITGAV:ITGB3 and ITGAV:ITGB6. In tumors, stimulates angiogenesis by elongation, migration and sprouting of endothelial cells. The chain is Tenascin from Mus musculus (Mouse).